The primary structure comprises 598 residues: N-acetylmuramoyl-L-alanine amidase (598 aa).

An N-terminal signal peptide occupies residues 1–31; that stretch reads MSPGNWKTTMVVRGILLILYGLLLQPEPGTA. Disordered regions lie at residues 172–194 and 212–233; these read SSAH…SPNV and STGV…KAKS. A Phosphoserine modification is found at S261. An N-linked (GlcNAc...) asparagine glycan is attached at N353. The region spanning 428–554 is the N-acetylmuramoyl-L-alanine amidase domain; it reads FLYIHHTYVP…RQLVRTDCPG (127 aa). H432 serves as a coordination point for Zn(2+). Cysteines 441 and 447 form a disulfide. A glycan (N-linked (GlcNAc...) asparagine) is linked at N507. H544 and C552 together coordinate Zn(2+).

It belongs to the N-acetylmuramoyl-L-alanine amidase 2 family. The cofactor is Zn(2+).

The protein resides in the secreted. The protein localises to the membrane. It carries out the reaction Hydrolyzes the link between N-acetylmuramoyl residues and L-amino acid residues in certain cell-wall glycopeptides.. In terms of biological role, may play a scavenger role by digesting biologically active peptidoglycan (PGN) into biologically inactive fragments. Has no direct bacteriolytic activity. The sequence is that of N-acetylmuramoyl-L-alanine amidase (PGLYRP2) from Sus scrofa (Pig).